We begin with the raw amino-acid sequence, 269 residues long: MAVVTMRELLDAGVHFGHQTRRWNPKMRRFIFTDRNGIYIIDLQQTLTYIDEAYEFVKETVAHGGNILFVGTKKQAQEAVANEAERVGMPYVNHRWLGGMLTNFQTVSKRLARMKELQAMDAAEDGYQGRTKKEILLLNREREKLERVLGGIADMTKVPSAMWVVDTNKEHIAVSEAKKLGIPVVAILDTNCDPDEVQYPVPGNDDAIRSANLLTSIISSAVEEGRKARAERQAAAAKDAAGDTGKSEADAEAVKAEAAAEEKAETTEA.

The interval 228–269 (ARAERQAAAAKDAAGDTGKSEADAEAVKAEAAAEEKAETTEA) is disordered. Residues 233 to 244 (QAAAAKDAAGDT) show a composition bias toward low complexity. Basic and acidic residues predominate over residues 245–269 (GKSEADAEAVKAEAAAEEKAETTEA).

This sequence belongs to the universal ribosomal protein uS2 family.

The polypeptide is Small ribosomal subunit protein uS2 (Corynebacterium urealyticum (strain ATCC 43042 / DSM 7109)).